Reading from the N-terminus, the 367-residue chain is 3-dehydroquinate synthase (367 aa).

NAD(+)-binding positions include 69-74 (DGEAFK), 103-107 (GVVGD), 127-128 (TT), Lys-140, Lys-149, and 167-170 (TLAT). Glu-182, His-245, and His-262 together coordinate Zn(2+).

It belongs to the sugar phosphate cyclases superfamily. Dehydroquinate synthase family. The cofactor is Co(2+). It depends on Zn(2+) as a cofactor. NAD(+) serves as cofactor.

It localises to the cytoplasm. The catalysed reaction is 7-phospho-2-dehydro-3-deoxy-D-arabino-heptonate = 3-dehydroquinate + phosphate. The protein operates within metabolic intermediate biosynthesis; chorismate biosynthesis; chorismate from D-erythrose 4-phosphate and phosphoenolpyruvate: step 2/7. Its function is as follows. Catalyzes the conversion of 3-deoxy-D-arabino-heptulosonate 7-phosphate (DAHP) to dehydroquinate (DHQ). This Azotobacter vinelandii (strain DJ / ATCC BAA-1303) protein is 3-dehydroquinate synthase.